A 338-amino-acid polypeptide reads, in one-letter code: L-asparaginase 1 (338 aa).

Residues 4 to 329 form the Asparaginase/glutaminase domain; the sequence is KSIYVAYTGG…ETIRKAMSQN (326 aa). Residue Thr14 is the O-isoaspartyl threonine intermediate of the active site. Residues 59-61 and 91-92 contribute to the substrate site; these read DSS and TD.

It belongs to the asparaginase 1 family. Homotetramer.

It localises to the cytoplasm. It carries out the reaction L-asparagine + H2O = L-aspartate + NH4(+). In Escherichia coli O157:H7, this protein is L-asparaginase 1 (ansA).